A 97-amino-acid polypeptide reads, in one-letter code: Acylphosphatase (97 aa).

Positions 3–97 (KVKMIVSGRV…PDFTDFNIKY (95 aa)) constitute an Acylphosphatase-like domain. Active-site residues include Arg18 and Asn36.

This sequence belongs to the acylphosphatase family.

It carries out the reaction an acyl phosphate + H2O = a carboxylate + phosphate + H(+). The polypeptide is Acylphosphatase (acyP) (Lactococcus lactis subsp. lactis (strain IL1403) (Streptococcus lactis)).